The sequence spans 643 residues: Mediator of RNA polymerase II transcription subunit 17 (643 aa).

The disordered stretch occupies residues 53 to 82 (SDSEEDGAERARAGREQWKQEPEEDEGQLK). Over residues 60–73 (AERARAGREQWKQE) the composition is skewed to basic and acidic residues.

Belongs to the Mediator complex subunit 17 family. Component of the Mediator complex.

It localises to the nucleus. Functionally, component of the Mediator complex, a coactivator involved in the regulated transcription of nearly all RNA polymerase II-dependent genes. Mediator functions as a bridge to convey information from gene-specific regulatory proteins to the basal RNA polymerase II transcription machinery. Mediator is recruited to promoters by direct interactions with regulatory proteins and serves as a scaffold for the assembly of a functional preinitiation complex with RNA polymerase II and the general transcription factors. This is Mediator of RNA polymerase II transcription subunit 17 (med17) from Danio rerio (Zebrafish).